The chain runs to 1071 residues: SLIT-ROBO Rho GTPase-activating protein 2 (1071 aa).

The F-BAR domain maps to Lys-22 to Asp-325. Basic and acidic residues predominate over residues Leu-181–Thr-203. A disordered region spans residues Leu-181–Ala-211. Residue Ser-206 is modified to Phosphoserine. Residues Gln-363–Ile-401 are a coiled coil. Phosphoserine is present on residues Ser-427, Ser-500, Ser-691, Ser-695, and Ser-724. Residues Ala-489–Phe-679 enclose the Rho-GAP domain. A disordered region spans residues Thr-703–Asp-726. Residues Cys-728–Thr-787 enclose the SH3 domain. 2 disordered regions span residues Arg-794–Cys-820 and Asn-835–Pro-936. Ser-795 is modified (phosphoserine). 3 stretches are compositionally biased toward polar residues: residues Leu-857–Pro-867, Arg-874–Leu-885, and Gly-897–His-907. Residue Ser-916 is modified to Phosphoserine. A compositionally biased stretch (polar residues) spans Ile-919–Asn-933. The residue at position 927 (Arg-927) is a Symmetric dimethylarginine; by PRMT5. Ser-930 bears the Phosphoserine mark. A coiled-coil region spans residues Glu-940–His-968. A disordered region spans residues Ser-983–Ala-1012. Phosphoserine is present on residues Ser-990, Ser-994, Ser-1013, and Ser-1027. Residues Lys-1029–Val-1071 are disordered. Positions Pro-1047–Val-1071 are enriched in polar residues.

As to quaternary structure, homodimer. Forms a heterooligomer with SRGAP1 and SRGAP3 through its F-BAR domain. Interacts (via SH3 domain) with GPHN. Interacts (via SH3 domain) with FMNL1 (activated by RAC1); regulates the actin filament severing activity of FMNL1 and actin dynamics. Interacts (via SH3 domain) with FMNL3. Interacts with RAC1; specifically stimulates RAC1 GTPase activity. Interacts (via F-BAR domain) with HOMER1. Interacts with ROBO1 and ROBO2. Interacts with FASLG. Interacts with PRMT5. Methylation at Arg-927 is required for the stimulation of cell migration, dimerization and localization at the plasma membrane protrusions.

It is found in the cell membrane. The protein resides in the cell projection. The protein localises to the dendritic spine. It localises to the postsynaptic density. Its subcellular location is the postsynaptic cell membrane. It is found in the lamellipodium. The protein resides in the cytoplasmic vesicle. The protein localises to the phagosome. It localises to the nucleus. Its subcellular location is the cytoplasm. It is found in the cytosol. Functionally, postsynaptic RAC1 GTPase activating protein (GAP) that plays a key role in neuronal morphogenesis and migration mainly during development of the cerebral cortex. Regulates excitatory and inhibitory synapse maturation and density in cortical pyramidal neurons. SRGAP2/SRGAP2A limits excitatory and inhibitory synapse density through its RAC1-specific GTPase activating activity, while it promotes maturation of both excitatory and inhibitory synapses through its ability to bind to the postsynaptic scaffolding protein HOMER1 at excitatory synapses, and the postsynaptic protein GPHN at inhibitory synapses. Mechanistically, acts by binding and deforming membranes, thereby regulating actin dynamics to regulate cell migration and differentiation. Promotes cell repulsion and contact inhibition of locomotion: localizes to protrusions with curved edges and controls the duration of RAC1 activity in contact protrusions. In non-neuronal cells, may also play a role in cell migration by regulating the formation of lamellipodia and filopodia. The sequence is that of SLIT-ROBO Rho GTPase-activating protein 2 from Rattus norvegicus (Rat).